The primary structure comprises 792 residues: Phenylalanine--tRNA ligase beta subunit (792 aa).

Positions 39-154 (LYSFASVITA…EATPLGEDLA (116 aa)) constitute a tRNA-binding domain. In terms of domain architecture, B5 spans 403–480 (RELKEVALRP…ESWNIETQNP (78 aa)). Mg(2+) is bound by residues aspartate 456, aspartate 462, glutamate 465, and glutamate 466. An FDX-ACB domain is found at 695-791 (AIYPSSFRDL…LLTDTKGTIN (97 aa)).

This sequence belongs to the phenylalanyl-tRNA synthetase beta subunit family. Type 1 subfamily. As to quaternary structure, tetramer of two alpha and two beta subunits. Requires Mg(2+) as cofactor.

It localises to the cytoplasm. The enzyme catalyses tRNA(Phe) + L-phenylalanine + ATP = L-phenylalanyl-tRNA(Phe) + AMP + diphosphate + H(+). The polypeptide is Phenylalanine--tRNA ligase beta subunit (pheT) (Chlamydia pneumoniae (Chlamydophila pneumoniae)).